We begin with the raw amino-acid sequence, 417 residues long: Pigment epithelium-derived factor (417 aa).

Residues 1–19 (MQALVLLLWTGALLGHGSS) form the signal peptide. The disordered stretch occupies residues 17 to 41 (GSSQNVPSSSEGSPVPDSTGEPVEE). Residues 18 to 28 (SSQNVPSSSEG) show a composition bias toward polar residues. Glutamine 20 is subject to Pyrrolidone carboxylic acid. At serine 24 the chain carries Phosphoserine. N-linked (GlcNAc...) asparagine glycosylation is present at asparagine 284.

The protein belongs to the serpin family. Interacts with PNPLA2; this interaction stimulates the phospholipase A2 activity of PNPLA2. Highly expressed in the liver, gastric glandular mucosa and renal tubules. It is also expressed in the brain, heart, lung retina and testes.

It is found in the secreted. It localises to the melanosome. Its function is as follows. Neurotrophic protein; induces extensive neuronal differentiation in retinoblastoma cells. Potent inhibitor of angiogenesis. As it does not undergo the S (stressed) to R (relaxed) conformational transition characteristic of active serpins, it exhibits no serine protease inhibitory activity. The chain is Pigment epithelium-derived factor (Serpinf1) from Mus musculus (Mouse).